The chain runs to 784 residues: Ribosome biogenesis protein BOP1 homolog (784 aa).

Positions 1–11 (MTKKLALKRKG) are enriched in basic residues. A disordered region spans residues 1–159 (MTKKLALKRK…DSDTSDEEDI (159 aa)). Acidic residues-rich tracts occupy residues 27 to 36 (SENEEEEEDL), 45 to 54 (EDSTDDEGID), 62 to 73 (SEELQFESDEEG), and 84 to 111 (AEED…EDEE). Residues 112 to 123 (KDSKLKQSDDKP) are compositionally biased toward basic and acidic residues. The segment covering 124 to 133 (SSSGAASKKA) has biased composition (low complexity). Residues 138–148 (LSKRDTSKPEY) are compositionally biased toward basic and acidic residues. Positions 149–158 (QDSDTSDEED) are enriched in acidic residues. 7 WD repeats span residues 445–486 (GHTD…RTIE), 488–526 (DEVV…KVLV), 570–612 (THFK…SQIP), 615–653 (KSKG…LVKK), 656–695 (TNSK…KPYQ), 699–738 (LHRN…DLLQ), and 754–784 (RDEF…RLYT).

This sequence belongs to the WD repeat BOP1/ERB1 family.

It localises to the nucleus. The protein resides in the nucleolus. The protein localises to the nucleoplasm. Required for maturation of ribosomal RNAs and formation of the large ribosomal subunit. This is Ribosome biogenesis protein BOP1 homolog from Drosophila erecta (Fruit fly).